The primary structure comprises 1307 residues: tRNA(adenine(34)) deaminase, chloroplastic (1307 aa).

A chloroplast-targeting transit peptide spans 1–55 (MFNTYTNSLQWPIRSRNQQDYCSLLPERSESYKLSKAYTSSRCYCVSSRSSCCCC). Disordered stretches follow at residues 245–377 (EYIG…ESTG), 439–458 (SSED…SSQE), 544–563 (HNPL…SHTS), 576–618 (EKRL…GQTT), 753–807 (GVIN…ATEG), 837–957 (SRAG…EEGG), and 975–1073 (LPSR…SVSA). Residues 267 to 278 (SSCSSYYSLASS) show a composition bias toward low complexity. Residues 280–309 (EFESDTEDQEEDVEIYRENVRSSEKKVVDQ) are a coiled coil. Acidic residues predominate over residues 281–292 (FESDTEDQEEDV). The segment covering 293-321 (EIYRENVRSSEKKVVDQSAKRLKSRKEAS) has biased composition (basic and acidic residues). Positions 367 to 377 (QTENRVSESTG) are enriched in polar residues. Residues 439–448 (SSEDRVSEMR) show a composition bias toward basic and acidic residues. Composition is skewed to polar residues over residues 546–563 (PLQT…SHTS) and 582–591 (QGSTTAVQSD). Composition is skewed to basic and acidic residues over residues 592–615 (SKVE…KKDG) and 760–771 (EEQRAESNQLKR). Over residues 852-863 (SSPNESVSSATW) the composition is skewed to polar residues. The span at 866 to 883 (GREHDGSSDDNTKGDKVL) shows a compositional bias: basic and acidic residues. 3 stretches are compositionally biased toward polar residues: residues 895–907 (VGQT…SEYP), 924–947 (SSPS…SGNQ), and 1045–1073 (SGSS…SVSA). The CMP/dCMP-type deaminase domain occupies 1108-1230 (TVDEIFMREA…RLFPGGEGNG (123 aa)). His1159 is a binding site for Zn(2+). Residue Glu1161 is the Proton donor of the active site. Residues Cys1189 and Cys1192 each coordinate Zn(2+). The tract at residues 1268 to 1293 (QLRRKKKDKNSDPPTPTDHHHHHLPK) is disordered.

This sequence belongs to the cytidine and deoxycytidylate deaminase family. As to quaternary structure, homodimer. Zn(2+) serves as cofactor.

It localises to the plastid. The protein resides in the chloroplast. The enzyme catalyses adenosine(34) in tRNA + H2O + H(+) = inosine(34) in tRNA + NH4(+). Functionally, deaminates adenosines to inosines in tRNA-Arg(ACG). Exclusively involved in A-to-I editing of the prokaryote-type chloroplast-tRNA and not involved in C-to-U editing. This is tRNA(adenine(34)) deaminase, chloroplastic (TADA) from Arabidopsis thaliana (Mouse-ear cress).